Consider the following 476-residue polypeptide: 3-isopropylmalate dehydratase large subunit (476 aa).

[4Fe-4S] cluster contacts are provided by C353, C413, and C416.

Belongs to the aconitase/IPM isomerase family. LeuC type 1 subfamily. Heterodimer of LeuC and LeuD. Requires [4Fe-4S] cluster as cofactor.

The catalysed reaction is (2R,3S)-3-isopropylmalate = (2S)-2-isopropylmalate. It participates in amino-acid biosynthesis; L-leucine biosynthesis; L-leucine from 3-methyl-2-oxobutanoate: step 2/4. Its function is as follows. Catalyzes the isomerization between 2-isopropylmalate and 3-isopropylmalate, via the formation of 2-isopropylmaleate. In Yersinia enterocolitica serotype O:8 / biotype 1B (strain NCTC 13174 / 8081), this protein is 3-isopropylmalate dehydratase large subunit.